The chain runs to 283 residues: Non-selective voltage-gated ion channel VDAC3 (283 aa).

Residue Cys-2 is modified to N-acetylcysteine. Thr-4 bears the Phosphothreonine mark. N6-acetyllysine is present on residues Lys-12, Lys-15, and Lys-20. A run of 2 beta stranded transmembrane segments spans residues 26–35 and 39–47; these read MVKIDLKTKS and VEFSTSGHA. Glycyl lysine isopeptide (Lys-Gly) (interchain with G-Cter in ubiquitin) cross-links involve residues Lys-53 and Lys-61. Beta stranded transmembrane passes span 54 to 64, 69 to 76, and 80 to 89; these read ASGNLETKYKV, LTFTQKWN, and TLGTEISWEN. At Lys-90 the chain carries N6-acetyllysine. The chain crosses the membrane as a beta stranded span at residues 95-104; sequence LKLTLDTIFV. Glycyl lysine isopeptide (Lys-Gly) (interchain with G-Cter in ubiquitin) cross-links involve residues Lys-109 and Lys-110. A run of 10 beta stranded transmembrane segments spans residues 111-120, 123-130, 137-145, 150-158, 163-175, 178-185, 189-198, 202-211, 218-227, and 231-238; these read SGKLKASYKR, FSVGSNVD, TIYGWAVLA, LAGYQMSFD, KLSQNNFALGYKA, FQLHTHVN, EFGGSIYQKV, IETSINLAWT, RFGIAAKYML, and TSLSAKVN. Residue Lys-163 forms a Glycyl lysine isopeptide (Lys-Gly) (interchain with G-Cter in ubiquitin) linkage. Position 241 is a phosphoserine (Ser-241). NAD(+)-binding positions include 242–244 and 260–264; these read LIG and SALID. Beta stranded transmembrane passes span 242–251 and 254–263; these read LIGLGYTQTL and GVKLTLSALI. Lys-266 carries the post-translational modification N6-acetyllysine; alternate. Residue Lys-266 forms a Glycyl lysine isopeptide (Lys-Gly) (interchain with G-Cter in ubiquitin); alternate linkage. The beta stranded transmembrane segment at 273 to 282 threads the bilayer; the sequence is HKVGLGFELE. Residue Lys-274 forms a Glycyl lysine isopeptide (Lys-Gly) (interchain with G-Cter in ubiquitin) linkage.

This sequence belongs to the eukaryotic mitochondrial porin family. In terms of assembly, interacts with ARMC12 in a TBC1D21-dependent manner. Interacts with MISFA. Ubiquitinated by PRKN during mitophagy, leading to its degradation and enhancement of mitophagy. Deubiquitinated by USP30. In terms of tissue distribution, expressed in erythrocytes (at protein level). Widely expressed. Highest in testis.

It localises to the mitochondrion outer membrane. The protein localises to the membrane. The catalysed reaction is chloride(in) = chloride(out). It carries out the reaction K(+)(in) = K(+)(out). In terms of biological role, non-selective voltage-gated ion channel that mediates the transport of anions and cations through the mitochondrion outer membrane and plasma membrane. Forms a high-conducting channel with a stable open state and a voltage-induced closure with a mild preference for anions over cations. Involved in male fertility and sperm mitochondrial sheath formation. This chain is Non-selective voltage-gated ion channel VDAC3, found in Homo sapiens (Human).